The chain runs to 208 residues: Proheparin-binding EGF-like growth factor (208 aa).

The signal sequence occupies residues 1–19 (MKLLPSVVLKLFLAAVLSA). Residues 20–62 (LVTGESLERLRRGLAAGTSNPDPPTVSTDQLLPLGGGRDRKVR) constitute a propeptide, or 72, or 73, or 76, or 81. Topologically, residues 20–160 (LVTGESLERL…ENRLYTYDHT (141 aa)) are extracellular. The segment at 33 to 56 (LAAGTSNPDPPTVSTDQLLPLGGG) is disordered. Residues 36–49 (GTSNPDPPTVSTDQ) show a composition bias toward polar residues. Residue threonine 37 is glycosylated (O-linked (GalNAc...) threonine). Residue serine 38 is glycosylated (O-linked (GalNAc...) serine). O-linked (GalNAc...) threonine glycans are attached at residues threonine 44, threonine 47, threonine 75, and threonine 85. The interval 82 to 104 (ALATPNKEEHGKRKKKGKGLGKK) is disordered. A compositionally biased stretch (basic residues) spans 93-102 (KRKKKGKGLG). Residues 104-144 (KRDPCLRKYKDFCIHGECKYVKELRAPSCICHPGYHGERCH) form the EGF-like domain. 3 cysteine pairs are disulfide-bonded: cysteine 108/cysteine 121, cysteine 116/cysteine 132, and cysteine 134/cysteine 143. Positions 149 to 208 (PVENRLYTYDHTTILAVVAVVLSSVCLLVIVGLLMFRYHRRGGYDVENEEKVKLGMTNSH) are cleaved as a propeptide — C-terminal. The helical transmembrane segment at 161–184 (TILAVVAVVLSSVCLLVIVGLLMF) threads the bilayer. At 185 to 208 (RYHRRGGYDVENEEKVKLGMTNSH) the chain is on the cytoplasmic side.

As to quaternary structure, interacts with FBLN1. Interacts with EGFR and ERBB4. In terms of processing, several N-termini have been identified by direct sequencing. The forms with N-termini 63, 73 and 74 have been tested and found to be biologically active. Post-translationally, O-glycosylated with core 1 or possibly core 8 glycans. Thr-47 is a minor glycosylation site compared to Thr-44.

It is found in the secreted. Its subcellular location is the extracellular space. It localises to the cell membrane. Growth factor that mediates its effects via EGFR, ERBB2 and ERBB4. Required for normal cardiac valve formation and normal heart function. Promotes smooth muscle cell proliferation. May be involved in macrophage-mediated cellular proliferation. It is mitogenic for fibroblasts, but not endothelial cells. It is able to bind EGF receptor/EGFR with higher affinity than EGF itself and is a far more potent mitogen for smooth muscle cells than EGF. Also acts as a diphtheria toxin receptor. The polypeptide is Proheparin-binding EGF-like growth factor (HBEGF) (Homo sapiens (Human)).